We begin with the raw amino-acid sequence, 37 residues long: Large ribosomal subunit protein bL36c (37 aa).

This sequence belongs to the bacterial ribosomal protein bL36 family.

It is found in the plastid. It localises to the chloroplast. The chain is Large ribosomal subunit protein bL36c (rpl36) from Porphyra purpurea (Red seaweed).